We begin with the raw amino-acid sequence, 320 residues long: Replication-associated protein ORF2 (320 aa).

Residues Y188 and Y192 each act as O-(5'-phospho-DNA)-tyrosine intermediate in the active site.

It belongs to the microviridae Rep protein family.

The catalysed reaction is ATP + (deoxyribonucleotide)n-3'-hydroxyl + 5'-phospho-(deoxyribonucleotide)m = (deoxyribonucleotide)n+m + AMP + diphosphate.. Functionally, plays an essential role in viral DNA replication. Binds the origin of replication and cleaves the dsDNA replicative form I (RFI) and becomes covalently bound to it via phosphotyrosine bond, generating the dsDNA replicative form II (RFII). In turn, viral DNA replication initiates at the 3'-OH of the cleavage site. After one round of rolling circle synthesis, protein ORF2 is linked to the newly synthesized ssDNA and joins the ends of the displaced strand to generate a circular single-stranded molecule ready to be packed into a virion. The protein is Replication-associated protein ORF2 of Spiroplasma virus 4 (SpV4).